Here is a 436-residue protein sequence, read N- to C-terminus: GTPase Der (436 aa).

2 EngA-type G domains span residues 4 to 167 (PTVA…PNEI) and 175 to 351 (IKFS…HAQN). GTP-binding positions include 10-17 (GRPNVGKS), 57-61 (DTGGI), 119-122 (NKVD), 181-188 (GRPNVGKS), 229-233 (DTAGM), and 294-297 (NKWD). One can recognise a KH-like domain in the interval 352 to 436 (LRISSSVLND…PIHLIARKRK (85 aa)).

It belongs to the TRAFAC class TrmE-Era-EngA-EngB-Septin-like GTPase superfamily. EngA (Der) GTPase family. In terms of assembly, associates with the 50S ribosomal subunit.

In terms of biological role, GTPase that plays an essential role in the late steps of ribosome biogenesis. This Lactococcus lactis subsp. cremoris (strain SK11) protein is GTPase Der.